The sequence spans 352 residues: Phosphoribosylformylglycinamidine cyclo-ligase (352 aa).

Belongs to the AIR synthase family.

The protein localises to the cytoplasm. It carries out the reaction 2-formamido-N(1)-(5-O-phospho-beta-D-ribosyl)acetamidine + ATP = 5-amino-1-(5-phospho-beta-D-ribosyl)imidazole + ADP + phosphate + H(+). Its pathway is purine metabolism; IMP biosynthesis via de novo pathway; 5-amino-1-(5-phospho-D-ribosyl)imidazole from N(2)-formyl-N(1)-(5-phospho-D-ribosyl)glycinamide: step 2/2. This is Phosphoribosylformylglycinamidine cyclo-ligase from Saccharophagus degradans (strain 2-40 / ATCC 43961 / DSM 17024).